The primary structure comprises 518 residues: Probable thiamine biosynthetic bifunctional enzyme (518 aa).

Positions 1–229 are thiamine-phosphate synthase; sequence MKRQIDYSLY…ATPPCFAQAR (229 aa). 4-amino-2-methyl-5-(diphosphooxymethyl)pyrimidine contacts are provided by residues 40–44 and Asn72; that span reads QHREK. 2 residues coordinate Mg(2+): Asp73 and Asp92. Ser111 is a binding site for 4-amino-2-methyl-5-(diphosphooxymethyl)pyrimidine. Residue 137–139 coordinates 2-[(2R,5Z)-2-carboxy-4-methylthiazol-5(2H)-ylidene]ethyl phosphate; sequence TNT. 4-amino-2-methyl-5-(diphosphooxymethyl)pyrimidine is bound at residue Lys140. 2-[(2R,5Z)-2-carboxy-4-methylthiazol-5(2H)-ylidene]ethyl phosphate-binding positions include Gly173 and 199–200; that span reads VS. Residues 230–518 are hydroxyethylthiazole kinase; that stretch reads SSLTTPKDLL…IERAKLEKAE (289 aa). Residue Met281 participates in 5-(2-hydroxyethyl)-4-methylthiazole binding. Lys355 and Ser403 together coordinate ATP. Position 430 (Ala430) interacts with 5-(2-hydroxyethyl)-4-methylthiazole. The active-site Proton acceptor; for hydroxyethylthiazole kinase activity is Cys433.

This sequence in the N-terminal section; belongs to the thiamine-phosphate synthase family. The protein in the C-terminal section; belongs to the Thz kinase family. The cofactor is Mg(2+).

The catalysed reaction is 2-[(2R,5Z)-2-carboxy-4-methylthiazol-5(2H)-ylidene]ethyl phosphate + 4-amino-2-methyl-5-(diphosphooxymethyl)pyrimidine + 2 H(+) = thiamine phosphate + CO2 + diphosphate. The enzyme catalyses 2-(2-carboxy-4-methylthiazol-5-yl)ethyl phosphate + 4-amino-2-methyl-5-(diphosphooxymethyl)pyrimidine + 2 H(+) = thiamine phosphate + CO2 + diphosphate. It carries out the reaction 4-methyl-5-(2-phosphooxyethyl)-thiazole + 4-amino-2-methyl-5-(diphosphooxymethyl)pyrimidine + H(+) = thiamine phosphate + diphosphate. It catalyses the reaction 5-(2-hydroxyethyl)-4-methylthiazole + ATP = 4-methyl-5-(2-phosphooxyethyl)-thiazole + ADP + H(+). Its pathway is cofactor biosynthesis; thiamine diphosphate biosynthesis; 4-methyl-5-(2-phosphoethyl)-thiazole from 5-(2-hydroxyethyl)-4-methylthiazole: step 1/1. The protein operates within cofactor biosynthesis; thiamine diphosphate biosynthesis; thiamine phosphate from 4-amino-2-methyl-5-diphosphomethylpyrimidine and 4-methyl-5-(2-phosphoethyl)-thiazole: step 1/1. Its function is as follows. Condenses 4-methyl-5-(beta-hydroxyethyl)thiazole monophosphate (THZ-P) and 2-methyl-4-amino-5-hydroxymethyl pyrimidine pyrophosphate (HMP-PP) to form thiamine monophosphate (TMP). The polypeptide is Probable thiamine biosynthetic bifunctional enzyme (thi4) (Schizosaccharomyces pombe (strain 972 / ATCC 24843) (Fission yeast)).